We begin with the raw amino-acid sequence, 309 residues long: Virulence regulon transcriptional activator VirB (309 aa).

The H-T-H motif DNA-binding region spans 152 to 171 (KDIAKKENLSRAKVTRAFQA).

This sequence belongs to the ParB family.

Transcription activator for the invasion antigens IpaB, IpaC and IpaD. VirB is itself regulated by VirF. In Shigella flexneri, this protein is Virulence regulon transcriptional activator VirB (virB).